The primary structure comprises 44 residues: uncharacterized protein (44 aa).

This is an uncharacterized protein from Caenorhabditis elegans.